Reading from the N-terminus, the 419-residue chain is eIF5-mimic protein 2 (419 aa).

Methionine 1 carries the post-translational modification N-acetylmethionine. Polar residues predominate over residues 1–15 (MNNQKQQKPTLSGQR). Residues 1-26 (MNNQKQQKPTLSGQRFKTRKRDEKER) form a disordered region. At serine 12 the chain carries Phosphoserine. In terms of domain architecture, W2 spans 247–414 (NQQTIGARKE…KNAEEESESE (168 aa)). Lysine 368 participates in a covalent cross-link: Glycyl lysine isopeptide (Lys-Gly) (interchain with G-Cter in SUMO2). Residues serine 411 and serine 413 each carry the phosphoserine modification.

Belongs to the BZW family.

Translation initiation regulator which represses repeat-associated non-AUG (RAN) initiated translation probably by acting as a competitive inhibitor of eukaryotic translation initiation factor 5 (EIF5) function. Enhances histone H4 gene transcription but does not seem to bind DNA directly. The protein is eIF5-mimic protein 2 (BZW1) of Homo sapiens (Human).